A 306-amino-acid polypeptide reads, in one-letter code: Mitochondrial glycine transporter (306 aa).

Solcar repeat units lie at residues 25–114, 121–205, and 217–301; these read QPVI…LKQY, PTAL…TKNV, and LVPV…MMAK. 6 helical membrane passes run 31-56, 89-115, 127-152, 180-203, 221-247, and 276-294; these read FLCG…TRLQ, GMSP…KQYF, VILG…TRYE, GLTA…SQTK, VNFS…KTHM, and GSVP…AWTV.

The protein belongs to the mitochondrial carrier (TC 2.A.29) family. SLC25A38 subfamily.

It is found in the mitochondrion inner membrane. The enzyme catalyses glycine(in) = glycine(out). Mitochondrial glycine transporter that imports glycine into the mitochondrial matrix. Plays an important role in providing glycine for the first enzymatic step in heme biosynthesis, the condensation of glycine with succinyl-CoA to produce 5-aminolevulinate (ALA) in the mitochondrial matrix. Required during erythropoiesis. Functionally, plays a role as pro-apoptotic protein that induces caspase-dependent apoptosis. This is Mitochondrial glycine transporter from Ovis aries (Sheep).